The sequence spans 416 residues: Putative F-box/kelch-repeat protein At1g12870 (416 aa).

The 50-residue stretch at 27–76 folds into the F-box domain; the sequence is MIASSSLPDDVVEEIFLKLPVKALMRFKSLSKQWRSTLESCYFSQRHLKI. Kelch repeat units lie at residues 199–243 and 297–341; these read LVWL…PASA and CMYE…HVLD.

The chain is Putative F-box/kelch-repeat protein At1g12870 from Arabidopsis thaliana (Mouse-ear cress).